Here is a 320-residue protein sequence, read N- to C-terminus: Aspartate carbamoyltransferase catalytic subunit (320 aa).

Carbamoyl phosphate contacts are provided by Arg-68 and Thr-69. Lys-96 serves as a coordination point for L-aspartate. Arg-118, His-148, and Gln-151 together coordinate carbamoyl phosphate. L-aspartate contacts are provided by Arg-181 and Arg-236. 2 residues coordinate carbamoyl phosphate: Gly-277 and Pro-278.

This sequence belongs to the aspartate/ornithine carbamoyltransferase superfamily. ATCase family. As to quaternary structure, heterododecamer (2C3:3R2) of six catalytic PyrB chains organized as two trimers (C3), and six regulatory PyrI chains organized as three dimers (R2).

It catalyses the reaction carbamoyl phosphate + L-aspartate = N-carbamoyl-L-aspartate + phosphate + H(+). It participates in pyrimidine metabolism; UMP biosynthesis via de novo pathway; (S)-dihydroorotate from bicarbonate: step 2/3. Its function is as follows. Catalyzes the condensation of carbamoyl phosphate and aspartate to form carbamoyl aspartate and inorganic phosphate, the committed step in the de novo pyrimidine nucleotide biosynthesis pathway. This chain is Aspartate carbamoyltransferase catalytic subunit, found in Delftia acidovorans (strain DSM 14801 / SPH-1).